We begin with the raw amino-acid sequence, 474 residues long: Recombinase Flp protein (474 aa).

A Tyr recombinase Flp-type domain is found at 135–421; the sequence is LSNNVGAEIS…LYLYTYAQQK (287 aa). Tyr342 serves as the catalytic O-(3'-phospho-DNA)-tyrosine intermediate. The tract at residues 426–474 is disordered; that stretch reads ADPNEQNRLFSSESPAHPFLTPQSTGSSTPLTWTAPKTLSTGLMTPGEE. 2 stretches are compositionally biased toward polar residues: residues 429-439 and 446-468; these read NEQNRLFSSES and TPQS…STGL.

Belongs to the 'phage' integrase family.

Its function is as follows. Catalyzes the recombination between the large inverted repetitions of the plasmid. In Zygosaccharomyces bailii, this protein is Recombinase Flp protein.